The sequence spans 216 residues: ATP phosphoribosyltransferase (216 aa).

Belongs to the ATP phosphoribosyltransferase family. Short subfamily. Heteromultimer composed of HisG and HisZ subunits.

Its subcellular location is the cytoplasm. The catalysed reaction is 1-(5-phospho-beta-D-ribosyl)-ATP + diphosphate = 5-phospho-alpha-D-ribose 1-diphosphate + ATP. The protein operates within amino-acid biosynthesis; L-histidine biosynthesis; L-histidine from 5-phospho-alpha-D-ribose 1-diphosphate: step 1/9. Catalyzes the condensation of ATP and 5-phosphoribose 1-diphosphate to form N'-(5'-phosphoribosyl)-ATP (PR-ATP). Has a crucial role in the pathway because the rate of histidine biosynthesis seems to be controlled primarily by regulation of HisG enzymatic activity. The sequence is that of ATP phosphoribosyltransferase from Nitrosomonas europaea (strain ATCC 19718 / CIP 103999 / KCTC 2705 / NBRC 14298).